The primary structure comprises 121 residues: Large ribosomal subunit protein bL12 (121 aa).

This sequence belongs to the bacterial ribosomal protein bL12 family. Homodimer. Part of the ribosomal stalk of the 50S ribosomal subunit. Forms a multimeric L10(L12)X complex, where L10 forms an elongated spine to which 2 to 4 L12 dimers bind in a sequential fashion. Binds GTP-bound translation factors.

In terms of biological role, forms part of the ribosomal stalk which helps the ribosome interact with GTP-bound translation factors. Is thus essential for accurate translation. This Clostridioides difficile (strain 630) (Peptoclostridium difficile) protein is Large ribosomal subunit protein bL12.